A 388-amino-acid chain; its full sequence is Succinate--CoA ligase [ADP-forming] subunit beta (388 aa).

The 236-residue stretch at 9 to 244 folds into the ATP-grasp domain; the sequence is KQLFAEYGLP…PSQDDAREAH (236 aa). Residues lysine 46, 53–55, glutamate 99, threonine 102, and glutamate 107 contribute to the ATP site; that span reads GRG. Positions 199 and 213 each coordinate Mg(2+). Residues asparagine 264 and 321–323 contribute to the substrate site; that span reads GIV.

This sequence belongs to the succinate/malate CoA ligase beta subunit family. Heterotetramer of two alpha and two beta subunits. Mg(2+) is required as a cofactor.

It catalyses the reaction succinate + ATP + CoA = succinyl-CoA + ADP + phosphate. The catalysed reaction is GTP + succinate + CoA = succinyl-CoA + GDP + phosphate. It participates in carbohydrate metabolism; tricarboxylic acid cycle; succinate from succinyl-CoA (ligase route): step 1/1. Functionally, succinyl-CoA synthetase functions in the citric acid cycle (TCA), coupling the hydrolysis of succinyl-CoA to the synthesis of either ATP or GTP and thus represents the only step of substrate-level phosphorylation in the TCA. The beta subunit provides nucleotide specificity of the enzyme and binds the substrate succinate, while the binding sites for coenzyme A and phosphate are found in the alpha subunit. The protein is Succinate--CoA ligase [ADP-forming] subunit beta of Pseudomonas aeruginosa (strain LESB58).